The chain runs to 463 residues: Steroidogenic factor 1 (463 aa).

A DNA-binding region (nuclear receptor) is located at residues 10–85; that stretch reads DELCPVCGDK…VGMRLEAVRA (76 aa). An NR C4-type zinc finger spans residues 13 to 33; it reads CPVCGDKVSGYHYGLLTCESC. N6-acetyllysine occurs at positions 34, 38, and 72. An NR C4-type zinc finger spans residues 49 to 73; sequence CTESQNCKIDKTQRKRCPYCRFQKC. A Glycyl lysine isopeptide (Lys-Gly) (interchain with G-Cter in SUMO) cross-link involves residue Lys-119. The interval 119 to 160 is disordered; the sequence is KLETGPSMGPPPQTDYPLAPALHPGAKGLAPAPPAGPPGDYE. Residues 135–148 are compositionally biased toward low complexity; it reads PLAPALHPGAKGLA. A Glycyl lysine isopeptide (Lys-Gly) (interchain with G-Cter in SUMO) cross-link involves residue Lys-193. The tract at residues 197-216 is disordered; the sequence is PEPYASPHEPAPPYGYPEPY. Ser-202 is subject to Phosphoserine; by CDK7. A compositionally biased stretch (pro residues) spans 205–216; it reads EPAPPYGYPEPY. Residues 224–461 enclose the NR LBD domain; sequence GVPELILKLL…NLLIEMLHAK (238 aa). A 1,2-diacyl-sn-glycero-3-phosphocholine is bound by residues Gly-343, Tyr-438, and Lys-442.

The protein belongs to the nuclear hormone receptor family. NR5 subfamily. As to quaternary structure, binds DNA as a monomer. Part of a complex consisting of SFPQ, NONO and NR5A1. Interacts with NR0B2, NCOA2 and PPARGC1A. Interacts with DGKQ and CDK7. Binds to and activated by HIPK3. In terms of processing, acetylation stimulates the transcriptional activity. Post-translationally, sumoylation reduces CDK7-mediated phosphorylation on Ser-202. Phosphorylated on Ser-202 by CDK7. This phosphorylation promotes transcriptional activity. As to expression, expressed in the pre-granulosa and Sertoli cells of the ovary and testis, respectively. In the testis it is also present in the interstitial cells. In the adult ovary it is expressed in the interstitial gland, and in the granulosa cells and theca interna of small to medium-sized antral follicles, but is not expressed in large antral follicles.

The protein localises to the nucleus. Transcriptional activator. Seems to be essential for sexual differentiation and formation of the primary steroidogenic tissues. Binds to the Ad4 site found in the promoter region of steroidogenic P450 genes such as CYP11A, CYP11B and CYP21B. Also regulates the AMH/Muellerian inhibiting substance gene as well as the AHCH and STAR genes. 5'-YCAAGGYC-3' and 5'-RRAGGTCA-3' are the consensus sequences for the recognition by NR5A1. The SFPQ-NONO-NR5A1 complex binds to the CYP17 promoter and regulates basal and cAMP-dependent transcriptional activity. Binds phosphatidylcholine and phospholipids with a phosphatidylinositol (PI) headgroup, in particular PI(3,4)P2 and PI(3,4,5)P3. Activated by the phosphorylation of NR5A1 by HIPK3 leading to increased steroidogenic gene expression upon cAMP signaling pathway stimulation. The polypeptide is Steroidogenic factor 1 (NR5A1) (Notamacropus eugenii (Tammar wallaby)).